We begin with the raw amino-acid sequence, 226 residues long: Cytidylate kinase (226 aa).

Residue 12-20 (GPSGAGKGT) coordinates ATP.

It belongs to the cytidylate kinase family. Type 1 subfamily.

The protein localises to the cytoplasm. It carries out the reaction CMP + ATP = CDP + ADP. The catalysed reaction is dCMP + ATP = dCDP + ADP. In Colwellia psychrerythraea (strain 34H / ATCC BAA-681) (Vibrio psychroerythus), this protein is Cytidylate kinase.